The chain runs to 338 residues: RNA 3'-terminal phosphate cyclase (338 aa).

Residues Q103 and 283–287 each bind ATP; that span reads YLADQ. The Tele-AMP-histidine intermediate role is filled by H308.

The protein belongs to the RNA 3'-terminal cyclase family. Type 1 subfamily.

The protein localises to the cytoplasm. It carries out the reaction a 3'-end 3'-phospho-ribonucleotide-RNA + ATP = a 3'-end 2',3'-cyclophospho-ribonucleotide-RNA + AMP + diphosphate. Functionally, catalyzes the conversion of 3'-phosphate to a 2',3'-cyclic phosphodiester at the end of RNA. The mechanism of action of the enzyme occurs in 3 steps: (A) adenylation of the enzyme by ATP; (B) transfer of adenylate to an RNA-N3'P to produce RNA-N3'PP5'A; (C) and attack of the adjacent 2'-hydroxyl on the 3'-phosphorus in the diester linkage to produce the cyclic end product. The biological role of this enzyme is unknown but it is likely to function in some aspects of cellular RNA processing. This is RNA 3'-terminal phosphate cyclase from Escherichia coli (strain SMS-3-5 / SECEC).